A 634-amino-acid chain; its full sequence is Chaperone protein HtpG (634 aa).

The tract at residues 1–342 (MTVETQKETL…SNDLSLNVSR (342 aa)) is a; substrate-binding. A b region spans residues 343–559 (EILQKDPIID…EQDLGLQMRQ (217 aa)). The interval 560–634 (ILEASGQKVP…LNKLLVELSA (75 aa)) is c.

Belongs to the heat shock protein 90 family. In terms of assembly, homodimer.

It is found in the cytoplasm. In terms of biological role, molecular chaperone. Has ATPase activity. The sequence is that of Chaperone protein HtpG from Pseudomonas putida (strain ATCC 47054 / DSM 6125 / CFBP 8728 / NCIMB 11950 / KT2440).